The primary structure comprises 98 residues: NADH-ubiquinone oxidoreductase chain 4L (98 aa).

Helical transmembrane passes span 1–21 (MTTM…GVYI), 29–49 (TLLC…LTLL), and 59–79 (FPLI…ALLV).

This sequence belongs to the complex I subunit 4L family. As to quaternary structure, core subunit of respiratory chain NADH dehydrogenase (Complex I) which is composed of 45 different subunits.

It is found in the mitochondrion inner membrane. It carries out the reaction a ubiquinone + NADH + 5 H(+)(in) = a ubiquinol + NAD(+) + 4 H(+)(out). In terms of biological role, core subunit of the mitochondrial membrane respiratory chain NADH dehydrogenase (Complex I) which catalyzes electron transfer from NADH through the respiratory chain, using ubiquinone as an electron acceptor. Part of the enzyme membrane arm which is embedded in the lipid bilayer and involved in proton translocation. This Zaglossus bruijni (Western long-beaked echidna) protein is NADH-ubiquinone oxidoreductase chain 4L (MT-ND4L).